The chain runs to 198 residues: ATP-dependent Clp protease proteolytic subunit 2 (198 aa).

The active-site Nucleophile is serine 101. Histidine 126 is a catalytic residue.

It belongs to the peptidase S14 family. As to quaternary structure, fourteen ClpP subunits assemble into 2 heptameric rings which stack back to back to give a disk-like structure with a central cavity, resembling the structure of eukaryotic proteasomes.

It is found in the cytoplasm. The catalysed reaction is Hydrolysis of proteins to small peptides in the presence of ATP and magnesium. alpha-casein is the usual test substrate. In the absence of ATP, only oligopeptides shorter than five residues are hydrolyzed (such as succinyl-Leu-Tyr-|-NHMec, and Leu-Tyr-Leu-|-Tyr-Trp, in which cleavage of the -Tyr-|-Leu- and -Tyr-|-Trp bonds also occurs).. Cleaves peptides in various proteins in a process that requires ATP hydrolysis. Has a chymotrypsin-like activity. Plays a major role in the degradation of misfolded proteins. In Thermosynechococcus vestitus (strain NIES-2133 / IAM M-273 / BP-1), this protein is ATP-dependent Clp protease proteolytic subunit 2.